The following is a 413-amino-acid chain: Argininosuccinate synthase (413 aa).

ATP contacts are provided by residues 14 to 22 (AYSGGLDTS) and alanine 41. L-citrulline-binding residues include tyrosine 94 and serine 99. Glycine 124 contacts ATP. Residues threonine 126, asparagine 130, and aspartate 131 each coordinate L-aspartate. Asparagine 130 is a binding site for L-citrulline. L-citrulline contacts are provided by arginine 134, serine 185, serine 194, glutamate 270, and tyrosine 282.

It belongs to the argininosuccinate synthase family. Type 1 subfamily. In terms of assembly, homotetramer.

The protein localises to the cytoplasm. It carries out the reaction L-citrulline + L-aspartate + ATP = 2-(N(omega)-L-arginino)succinate + AMP + diphosphate + H(+). The protein operates within amino-acid biosynthesis; L-arginine biosynthesis; L-arginine from L-ornithine and carbamoyl phosphate: step 2/3. This Hyphomonas neptunium (strain ATCC 15444) protein is Argininosuccinate synthase.